A 512-amino-acid polypeptide reads, in one-letter code: Hyaluronidase PH-20 (512 aa).

The N-terminal stretch at 1 to 35 (MGELQFKWLFWRSFAESGGTFQTVLIFLFIPYSLT) is a signal peptide. Disulfide bonds link Cys-60–Cys-351 and Cys-223–Cys-237. The N-linked (GlcNAc...) asparagine glycan is linked to Asn-63. Catalysis depends on Glu-147, which acts as the Proton donor. N-linked (GlcNAc...) asparagine glycosylation is found at Asn-165 and Asn-179. An N-linked (GlcNAc...) asparagine glycan is attached at Asn-368. Disulfide bonds link Cys-376–Cys-387, Cys-381–Cys-435, and Cys-437–Cys-464. Asn-408 carries an N-linked (GlcNAc...) asparagine glycan.

Belongs to the glycosyl hydrolase 56 family.

The protein resides in the cell membrane. The enzyme catalyses Random hydrolysis of (1-&gt;4)-linkages between N-acetyl-beta-D-glucosamine and D-glucuronate residues in hyaluronate.. Its function is as follows. Involved in sperm-egg adhesion. Upon fertilization sperm must first penetrate a layer of cumulus cells that surrounds the egg before reaching the zona pellucida. The cumulus cells are embedded in a matrix containing hyaluronic acid which is formed prior to ovulation. This protein aids in penetrating the layer of cumulus cells by digesting hyaluronic acid. The protein is Hyaluronidase PH-20 (Spam1) of Rattus norvegicus (Rat).